Here is a 222-residue protein sequence, read N- to C-terminus: Peroxisomal membrane protein 11-4 (222 aa).

The Cytoplasmic segment spans residues methionine 1–glutamate 81. The chain crosses the membrane as a helical span at residues phenylalanine 82–phenylalanine 102. Topologically, residues threonine 103–proline 196 are lumenal. Residues phenylalanine 197–tyrosine 217 traverse the membrane as a helical segment. The Cytoplasmic segment spans residues arginine 218–serine 222.

This sequence belongs to the peroxin-11 family. In terms of tissue distribution, expressed in seedlings, shoots, leaf sheaths and flag leaf.

It localises to the peroxisome membrane. Its function is as follows. Involved in peroxisomal proliferation. This chain is Peroxisomal membrane protein 11-4 (PEX11-4), found in Oryza sativa subsp. indica (Rice).